Consider the following 462-residue polypeptide: NADH-quinone oxidoreductase subunit N 1 (462 aa).

A run of 15 helical transmembrane segments spans residues 4-24 (FVVA…VLCL), 32-52 (AGFY…WAVA), 60-80 (IACF…ALLA), 88-108 (FAGD…LLLA), 113-133 (WIML…LIAA), 148-168 (FLPG…IYAA), 178-198 (LAAP…GVGF), 220-240 (VAAF…LHVC), 251-271 (LWPA…LGAV), 279-299 (LLAY…MAVN), 307-327 (LFYL…VGAL), 351-371 (AGVL…AGFV), 374-394 (FLVF…FGII), 416-436 (LIAH…ALGV), and 439-459 (AGLV…AALF).

The protein belongs to the complex I subunit 2 family. In terms of assembly, NDH-1 is composed of 14 different subunits. Subunits NuoA, H, J, K, L, M, N constitute the membrane sector of the complex.

The protein localises to the cell inner membrane. The enzyme catalyses a quinone + NADH + 5 H(+)(in) = a quinol + NAD(+) + 4 H(+)(out). In terms of biological role, NDH-1 shuttles electrons from NADH, via FMN and iron-sulfur (Fe-S) centers, to quinones in the respiratory chain. The immediate electron acceptor for the enzyme in this species is believed to be ubiquinone. Couples the redox reaction to proton translocation (for every two electrons transferred, four hydrogen ions are translocated across the cytoplasmic membrane), and thus conserves the redox energy in a proton gradient. This is NADH-quinone oxidoreductase subunit N 1 from Solidesulfovibrio magneticus (strain ATCC 700980 / DSM 13731 / RS-1) (Desulfovibrio magneticus).